Reading from the N-terminus, the 69-residue chain is Neurotoxin Cex3 (69 aa).

Residue Ala1 is a signal peptide. Residues 2–67 (KDGYLVNKST…TYPLPNKSCG (66 aa)) form the LCN-type CS-alpha/beta domain. 4 disulfide bridges follow: Cys13/Cys66, Cys17/Cys42, Cys26/Cys47, and Cys30/Cys49. Cys66 is modified (cysteine amide). A propeptide spanning residues 67-69 (GRK) is cleaved from the precursor.

Belongs to the long (4 C-C) scorpion toxin superfamily. Sodium channel inhibitor family. Beta subfamily. Expressed by the venom gland.

The protein localises to the secreted. In terms of biological role, beta toxins bind voltage-independently at site-4 of sodium channels (Nav) and shift the voltage of activation toward more negative potentials thereby affecting sodium channel activation and promoting spontaneous and repetitive firing. This Centruroides exilicauda (Bark scorpion) protein is Neurotoxin Cex3.